Here is a 420-residue protein sequence, read N- to C-terminus: DNA repair protein RadA (420 aa).

62 to 69 serves as a coordination point for ATP; the sequence is GDPGIGKS. A RadA KNRFG motif motif is present at residues 218–222; the sequence is KNRFG. Positions 317-420 are lon-protease-like; that stretch reads DAYLKSAGGV…IQEVLKKVFA (104 aa).

Belongs to the RecA family. RadA subfamily.

Its function is as follows. Plays a role in repairing double-strand DNA breaks, probably involving stabilizing or processing branched DNA or blocked replication forks. Required for efficient transformation with chromosomal (linear) DNA, but not for replicative plasmid DNA. Its increased sensitivity to a DNA damaging agent suggests it may be required for DNA repair. The protein is DNA repair protein RadA of Streptococcus pneumoniae (strain ATCC BAA-255 / R6).